The primary structure comprises 237 residues: Histone H1E (237 aa).

Low complexity predominate over residues 1-21; sequence MSDPAQEVEAPVEAAPVASSP. Disordered regions lie at residues 1–56 and 109–237; these read MSDP…PVSE and LQAK…KKAK. Basic and acidic residues predominate over residues 26–42; it reads EKAPKAPKAEKPKSDKP. The region spanning 50 to 124 is the H15 domain; that stretch reads THPPVSEMVV…GASGSFKLPP (75 aa). The span at 182 to 195 shows a compositional bias: low complexity; sequence AKPAAKKAAAPKPK. Basic and acidic residues predominate over residues 200 to 209; it reads PKKEVKPKKE. A compositionally biased stretch (basic residues) spans 210–237; sequence AKPKKAAAKPAKKPAAKPAKKPAAKKAK.

This sequence belongs to the histone H1/H5 family.

The protein localises to the nucleus. Its subcellular location is the chromosome. Histones H1 are necessary for the condensation of nucleosome chains into higher-order structures. This Chironomus tentans (Midge) protein is Histone H1E.